A 399-amino-acid polypeptide reads, in one-letter code: uncharacterized protein (399 aa).

The next 10 helical transmembrane spans lie at 6–26 (HLTF…LIIP), 27–47 (KGYN…FIPL), 60–80 (LIFS…INKD), 111–131 (ILYA…FQKF), 147–167 (MGNI…HFFI), 173–193 (STLF…LSGA), 195–215 (GGWI…KEFI), 220–240 (IITL…SPKF), 328–348 (GLVG…YFIK), and 362–382 (ILGI…SFLA).

The protein localises to the cell membrane. This is an uncharacterized protein from Haemophilus influenzae (strain ATCC 51907 / DSM 11121 / KW20 / Rd).